Reading from the N-terminus, the 375-residue chain is Histidine biosynthesis bifunctional protein HisB (375 aa).

The histidinol-phosphatase stretch occupies residues 1-168 (MTPIVFIDRD…GIAHTLADAP (168 aa)). The Nucleophile role is filled by aspartate 8. Residues aspartate 8, aspartate 10, and aspartate 128 each contribute to the Mg(2+) site. The active-site Proton donor is aspartate 10. The imidazoleglycerol-phosphate dehydratase stretch occupies residues 169–375 (RRAVVQRHTK…HVLPSTKGAL (207 aa)).

In the N-terminal section; belongs to the histidinol-phosphatase family. This sequence in the C-terminal section; belongs to the imidazoleglycerol-phosphate dehydratase family. Requires Mg(2+) as cofactor.

It is found in the cytoplasm. The enzyme catalyses D-erythro-1-(imidazol-4-yl)glycerol 3-phosphate = 3-(imidazol-4-yl)-2-oxopropyl phosphate + H2O. The catalysed reaction is L-histidinol phosphate + H2O = L-histidinol + phosphate. It functions in the pathway amino-acid biosynthesis; L-histidine biosynthesis; L-histidine from 5-phospho-alpha-D-ribose 1-diphosphate: step 6/9. Its pathway is amino-acid biosynthesis; L-histidine biosynthesis; L-histidine from 5-phospho-alpha-D-ribose 1-diphosphate: step 8/9. The chain is Histidine biosynthesis bifunctional protein HisB from Xylella fastidiosa (strain 9a5c).